A 161-amino-acid polypeptide reads, in one-letter code: ATP synthase subunit b (161 aa).

A helical membrane pass occupies residues 2–22; sequence VIEWGTALYQLLAFAVLLLIL.

This sequence belongs to the ATPase B chain family. F-type ATPases have 2 components, F(1) - the catalytic core - and F(0) - the membrane proton channel. F(1) has five subunits: alpha(3), beta(3), gamma(1), delta(1), epsilon(1). F(0) has three main subunits: a(1), b(2) and c(10-14). The alpha and beta chains form an alternating ring which encloses part of the gamma chain. F(1) is attached to F(0) by a central stalk formed by the gamma and epsilon chains, while a peripheral stalk is formed by the delta and b chains.

It localises to the cell membrane. In terms of biological role, f(1)F(0) ATP synthase produces ATP from ADP in the presence of a proton or sodium gradient. F-type ATPases consist of two structural domains, F(1) containing the extramembraneous catalytic core and F(0) containing the membrane proton channel, linked together by a central stalk and a peripheral stalk. During catalysis, ATP synthesis in the catalytic domain of F(1) is coupled via a rotary mechanism of the central stalk subunits to proton translocation. Component of the F(0) channel, it forms part of the peripheral stalk, linking F(1) to F(0). The protein is ATP synthase subunit b of Shouchella clausii (strain KSM-K16) (Alkalihalobacillus clausii).